A 301-amino-acid polypeptide reads, in one-letter code: MADFVSTSPFGPVLTAMVTPFNADGGVDYGVAEKLADHLITHGSDGLVVCGTTGESPTLSWEEEHELFRVVKQTVGDRGSVIAGTGSNCTREAMEATQIAAKLGVDGSLQVVPYYNKPPQEGLLAHFQAIANCAPELPLMLYNIPGRTGQSLAPETVYRLAEVENIVAIKEATGSLEQASLIRAHTPDDFAIYAGDDVLTLPLLAVGGAGVVSVASHLVGDRLQAMVQHFAQGATAQALEIHLQLIPLFKILFCATNPIPVKTALGLQGWPVGSFRPPLCALSPGHTEQLRDVLRDLALLP.

Thr-53 serves as a coordination point for pyruvate. The active-site Proton donor/acceptor is Tyr-142. The active-site Schiff-base intermediate with substrate is Lys-170. Val-212 contributes to the pyruvate binding site.

Belongs to the DapA family. In terms of assembly, homotetramer; dimer of dimers.

It is found in the cytoplasm. The catalysed reaction is L-aspartate 4-semialdehyde + pyruvate = (2S,4S)-4-hydroxy-2,3,4,5-tetrahydrodipicolinate + H2O + H(+). Its pathway is amino-acid biosynthesis; L-lysine biosynthesis via DAP pathway; (S)-tetrahydrodipicolinate from L-aspartate: step 3/4. Functionally, catalyzes the condensation of (S)-aspartate-beta-semialdehyde [(S)-ASA] and pyruvate to 4-hydroxy-tetrahydrodipicolinate (HTPA). The polypeptide is 4-hydroxy-tetrahydrodipicolinate synthase (Synechocystis sp. (strain ATCC 27184 / PCC 6803 / Kazusa)).